Here is a 506-residue protein sequence, read N- to C-terminus: Acetylcholine receptor subunit gamma (506 aa).

The first 17 residues, 1–17 (MVLTLLLIICLALEVRS), serve as a signal peptide directing secretion. Topologically, residues 18 to 235 (ENEEGRLIEK…IIFFLIIQRK (218 aa)) are extracellular. An N-linked (GlcNAc...) asparagine glycan is attached at Asn85. Residues Cys145 and Cys159 are joined by a disulfide bond. 3 helical membrane-spanning segments follow: residues 236–260 (PLFY…VYFL), 269–287 (CTLS…FLIA), and 303–324 (YLIF…VLNV). The Cytoplasmic portion of the chain corresponds to 325 to 466 (SLRTPNTHSL…WVLIGKVIDK (142 aa)). Tyr381 carries the phosphotyrosine; by Tyr-kinases modification. A helical transmembrane segment spans residues 467 to 490 (ACFWIALLLFSIGTLAIFLTGHFN).

Belongs to the ligand-gated ion channel (TC 1.A.9) family. Acetylcholine receptor (TC 1.A.9.1) subfamily. Gamma/CHRNG sub-subfamily. As to quaternary structure, pentamer of two alpha chains, and one each of the beta, delta, and gamma chains. Post-translationally, seems not to be glycosylated on Asn-158.

It is found in the postsynaptic cell membrane. The protein resides in the cell membrane. The enzyme catalyses K(+)(in) = K(+)(out). The catalysed reaction is Na(+)(in) = Na(+)(out). Its function is as follows. After binding acetylcholine, the AChR responds by an extensive change in conformation that affects all subunits and leads to opening of an ion-conducting channel across the plasma membrane. The protein is Acetylcholine receptor subunit gamma (CHRNG) of Tetronarce californica (Pacific electric ray).